Here is a 497-residue protein sequence, read N- to C-terminus: SPI-2 type 3 secretion system secretin (497 aa).

The signal sequence occupies residues 1–20 (MVVNKRLILILLFILNTAKS).

Belongs to the bacterial secretin family. T3SS SctC subfamily. The core secretion machinery of the T3SS is composed of approximately 20 different proteins, including cytoplasmic components, a base, an export apparatus and a needle. This subunit is part of the base, which anchors the injectisome in the bacterial cell envelope. Forms a stable homooligomeric complex.

It localises to the cell outer membrane. In terms of biological role, component of the type III secretion system (T3SS), also called injectisome, which is used to inject bacterial effector proteins into eukaryotic host cells. Forms a ring-shaped multimeric structure with an apparent central pore in the outer membrane. Required for secretion of some type III-secreted effectors including the SpvB exotoxin. This is SPI-2 type 3 secretion system secretin from Salmonella typhimurium (strain 14028s / SGSC 2262).